The chain runs to 361 residues: Chorismate synthase (361 aa).

Position 48 (Arg48) interacts with NADP(+). FMN contacts are provided by residues 125-127 (RSS), 238-239 (NA), Gly278, 293-297 (KPTSS), and Arg319.

Belongs to the chorismate synthase family. In terms of assembly, homotetramer. FMNH2 is required as a cofactor.

The catalysed reaction is 5-O-(1-carboxyvinyl)-3-phosphoshikimate = chorismate + phosphate. It functions in the pathway metabolic intermediate biosynthesis; chorismate biosynthesis; chorismate from D-erythrose 4-phosphate and phosphoenolpyruvate: step 7/7. Its function is as follows. Catalyzes the anti-1,4-elimination of the C-3 phosphate and the C-6 proR hydrogen from 5-enolpyruvylshikimate-3-phosphate (EPSP) to yield chorismate, which is the branch point compound that serves as the starting substrate for the three terminal pathways of aromatic amino acid biosynthesis. This reaction introduces a second double bond into the aromatic ring system. This is Chorismate synthase from Vibrio anguillarum (strain ATCC 68554 / 775) (Listonella anguillarum).